A 123-amino-acid polypeptide reads, in one-letter code: Large ribosomal subunit protein uL18 (123 aa).

The protein belongs to the universal ribosomal protein uL18 family. In terms of assembly, part of the 50S ribosomal subunit; part of the 5S rRNA/L5/L18/L25 subcomplex. Contacts the 5S and 23S rRNAs.

In terms of biological role, this is one of the proteins that bind and probably mediate the attachment of the 5S RNA into the large ribosomal subunit, where it forms part of the central protuberance. This is Large ribosomal subunit protein uL18 from Chlamydia muridarum (strain MoPn / Nigg).